We begin with the raw amino-acid sequence, 161 residues long: Cyclic pyranopterin monophosphate synthase (161 aa).

Residues 75–77 (MCH) and 115–116 (ME) contribute to the substrate site. Aspartate 130 is an active-site residue.

It belongs to the MoaC family. In terms of assembly, homohexamer; trimer of dimers.

It carries out the reaction (8S)-3',8-cyclo-7,8-dihydroguanosine 5'-triphosphate = cyclic pyranopterin phosphate + diphosphate. It participates in cofactor biosynthesis; molybdopterin biosynthesis. Its function is as follows. Catalyzes the conversion of (8S)-3',8-cyclo-7,8-dihydroguanosine 5'-triphosphate to cyclic pyranopterin monophosphate (cPMP). This is Cyclic pyranopterin monophosphate synthase from Bacillus cereus (strain G9842).